A 695-amino-acid polypeptide reads, in one-letter code: Follicle-stimulating hormone receptor (695 aa).

Positions 1-17 (MSLLLVSLLAFLTLGSG) are cleaved as a signal peptide. 2 disulfides stabilise this stretch: Cys18–Cys25 and Cys23–Cys32. The region spanning 18–46 (CHHRICHCSNGVFLCQESKVTEIPPDLPR) is the LRRNT domain. Topologically, residues 18–366 (CHHRICHCSN…EDIMGHDILR (349 aa)) are extracellular. LRR repeat units follow at residues 49–72 (VELR…FGDL), 73–97 (EKIE…LPKL), 98–118 (HEIR…AFQN), 119–143 (LPNL…KIQS), 144–169 (LQKV…VGLS), 170–192 (FESM…AFNG), 193–216 (TQLD…VFQG), 217–240 (ASGP…GLEN), and 241–259 (LKKL…PSLE). Residues Asn191 and Asn199 are each glycosylated (N-linked (GlcNAc...) asparagine). 4 disulfides stabilise this stretch: Cys275–Cys346, Cys276–Cys292, Cys276–Cys356, and Cys292–Cys338. N-linked (GlcNAc...) asparagine glycosylation occurs at Asn293. Sulfotyrosine is present on Tyr335. Residues 367-387 (VLIWFISILAITGNIIVLVIL) traverse the membrane as a helical segment. The Cytoplasmic segment spans residues 388–398 (ITSQYKLTVPR). The helical transmembrane segment at 399–421 (FLMCNLAFADLCIGIYLLLIASV) threads the bilayer. The Extracellular segment spans residues 422-443 (DIHTKTQYHNYAIDWQTGAGCD). Cysteines 442 and 517 form a disulfide. A helical membrane pass occupies residues 444 to 465 (AAGFFTVFASELSVYTLTAITL). Residues 466–485 (ERWHTITHAMQLQCKVQLRH) lie on the Cytoplasmic side of the membrane. A helical membrane pass occupies residues 486-508 (AASIMLVGWIFAFTVALFPIFGI). Topologically, residues 509 to 528 (SSYMKVSICLPMDIDSPLSQ) are extracellular. A helical transmembrane segment spans residues 529–550 (LYVVSLLVLNVLAFVVICGCYT). The Cytoplasmic segment spans residues 551–573 (HIYLTVRNPNIMSSSSDTKIAKR). A helical membrane pass occupies residues 574–597 (MAMLIFTDFLCMAPISFFAISASL). Topologically, residues 598-608 (KVPLITVSKSK) are extracellular. The helical transmembrane segment at 609 to 630 (ILLVLFYPINSCANPFLYAIFT) threads the bilayer. At 631-695 (KNFRRDVFIL…LIPLSRLAQN (65 aa)) the chain is on the cytoplasmic side.

The protein belongs to the G-protein coupled receptor 1 family. FSH/LSH/TSH subfamily. In terms of assembly, homotrimer. Functions as a homotrimer binding the FSH hormone heterodimer composed of CGA and FSHB. Interacts with ARRB2. Interacts with APPL2; interaction is independent of follicle stimulating hormone stimulation. N-glycosylated; indirectly required for FSH-binding, possibly via a conformational change that allows high affinity binding of hormone. Post-translationally, sulfated.

It is found in the cell membrane. Its function is as follows. G protein-coupled receptor for follitropin, the follicle-stimulating hormone. Through cAMP production activates the downstream PI3K-AKT and ERK1/ERK2 signaling pathways. The polypeptide is Follicle-stimulating hormone receptor (FSHR) (Sus scrofa (Pig)).